We begin with the raw amino-acid sequence, 377 residues long: 4-hydroxy-3-methylbut-2-en-1-yl diphosphate synthase (flavodoxin) (377 aa).

[4Fe-4S] cluster-binding residues include C272, C275, C307, and E314.

This sequence belongs to the IspG family. It depends on [4Fe-4S] cluster as a cofactor.

It carries out the reaction (2E)-4-hydroxy-3-methylbut-2-enyl diphosphate + oxidized [flavodoxin] + H2O + 2 H(+) = 2-C-methyl-D-erythritol 2,4-cyclic diphosphate + reduced [flavodoxin]. The protein operates within isoprenoid biosynthesis; isopentenyl diphosphate biosynthesis via DXP pathway; isopentenyl diphosphate from 1-deoxy-D-xylulose 5-phosphate: step 5/6. Functionally, converts 2C-methyl-D-erythritol 2,4-cyclodiphosphate (ME-2,4cPP) into 1-hydroxy-2-methyl-2-(E)-butenyl 4-diphosphate. This is 4-hydroxy-3-methylbut-2-en-1-yl diphosphate synthase (flavodoxin) from Zymomonas mobilis subsp. mobilis (strain ATCC 31821 / ZM4 / CP4).